A 156-amino-acid polypeptide reads, in one-letter code: Type II secretion system core protein G (156 aa).

The propeptide at 1 to 22 (MQQSQRGCGQNSYGQSGYRQRG) is leader sequence. Phe-23 is modified (N-methylphenylalanine). The chain crosses the membrane as a helical span at residues 23–43 (FTLLEIMVVIVILGVLASLVV).

The protein belongs to the GSP G family. In terms of assembly, type II secretion system is composed of four main components: the outer membrane complex, the inner membrane complex, the cytoplasmic secretion ATPase and the periplasm-spanning pseudopilus. Forms homomultimers. Cleaved by the prepilin peptidase. Post-translationally, methylated by prepilin peptidase at the amino group of the N-terminal phenylalanine once the leader sequence is cleaved.

The protein resides in the cell inner membrane. Core component of the type II secretion system required for the energy-dependent secretion of extracellular factors such as proteases and toxins from the periplasm. Pseudopilin (pilin-like) protein that polymerizes to form the pseudopilus. Further polymerization triggers pseudopilus growth. The protein is Type II secretion system core protein G (outG) of Pectobacterium carotovorum subsp. carotovorum (Erwinia carotovora subsp. carotovora).